A 487-amino-acid chain; its full sequence is MHISSLPGKYGIGTFGRSAYEFCDFLEKAGQKYWQILPLGQTSYGDSPYQSFSAFAGNPYFIDLDILNEKNLLDKDDYEEKNFGDNKEMINYGLIFNEKMKVLRKAYMNFNSKDDESFAKFIEDEKKWLDDYSLFMALKYKFNFISWNSWNKDIKLRKNEEIEKYKDELKEDVNYWKFLQYEFFSQWKNLKDYANKKNIKIIGDIPIYIAQDSSDVWSNPDIFLLNKETLEPLKVSGCPPDAFSETGQLWGNPIYDWGYLEKTNFEWWVDRIKSSLKLYDILRIDHFRGFEAYWSVDYGEKTAQNGKWIKGPEMKLFNVIKEKIGDIEIIAEDLGYLTEETLEFKKRTGFPGMKIIQFAFGGDSSNPYLPHNYEKNCVAYTGTHDNDTVRGWFEVTGSKEEKEKAVEYFKLTEEEGYNWGVIRGVWSSVANTSIGVMQDFLNLGNEARINKPSTLASNWSWRAKDNVFTNELANKIYRLTRIYGRCE.

It belongs to the disproportionating enzyme family.

It localises to the cytoplasm. It catalyses the reaction Transfers a segment of a (1-&gt;4)-alpha-D-glucan to a new position in an acceptor, which may be glucose or a (1-&gt;4)-alpha-D-glucan.. In terms of biological role, catalyzes a disproportionation reaction in which single or multiple glucose units from oligosaccharides are transferred to the 4-hydroxyl group of acceptor sugars. Glucose, maltose and maltotriose can act as acceptor, whereas of the three only maltotriose can act as donor. In Clostridium butyricum, this protein is 4-alpha-glucanotransferase (malQ).